Reading from the N-terminus, the 185-residue chain is Ribosome-recycling factor (185 aa).

This sequence belongs to the RRF family.

It is found in the cytoplasm. Responsible for the release of ribosomes from messenger RNA at the termination of protein biosynthesis. May increase the efficiency of translation by recycling ribosomes from one round of translation to another. This is Ribosome-recycling factor from Thermomicrobium roseum (strain ATCC 27502 / DSM 5159 / P-2).